A 180-amino-acid chain; its full sequence is ADP-ribosylation factor 4 (180 aa).

Gly-2 carries the N-myristoyl glycine lipid modification. GTP contacts are provided by residues 24–31 (GLDAAGKT), 67–71 (DVGGQ), and 126–129 (NKQD).

This sequence belongs to the small GTPase superfamily. Arf family.

The protein localises to the golgi apparatus. In terms of biological role, GTP-binding protein involved in protein trafficking; may modulate vesicle budding and uncoating within the Golgi apparatus. May be involved in ciliogenesis. The sequence is that of ADP-ribosylation factor 4 (arf4) from Xenopus laevis (African clawed frog).